The chain runs to 452 residues: uncharacterized protein (452 aa).

7 helical membrane-spanning segments follow: residues 18–38 (PIIE…VLAK), 81–101 (LLPV…FLLA), 269–289 (IVLL…ALFI), 317–337 (AGQV…ATDI), 354–374 (VIIV…LPAF), 390–410 (VFVV…LTQI), and 428–448 (SYAV…LLVV).

Belongs to the auxin efflux carrier (TC 2.A.69) family.

The protein localises to the membrane. This is an uncharacterized protein from Schizosaccharomyces pombe (strain 972 / ATCC 24843) (Fission yeast).